A 113-amino-acid polypeptide reads, in one-letter code: Eukaryotic translation initiation factor 1b (113 aa).

N-acetylserine is present on Ser2. Residue Ser9 is modified to Phosphoserine.

The protein belongs to the SUI1 family.

Functionally, probably involved in translation. This is Eukaryotic translation initiation factor 1b (EIF1B) from Homo sapiens (Human).